The chain runs to 342 residues: MPFLLGLRQDKEACVGTNNQSYICDTGHCCGQSQCCNYYYELWWFWLVWTIIIILSCCCVCHHRRAKHRLQAQQRQHEINLIAYREAHNYSALPFYFRFLPNYLLPPYEEVVNRPPTPPPPYSAFQLQQQQLLPPQCGPAGGSPPGIDPTRGSQGAQSSPLSEPSRSSTRPPSIADPDPSDLPVDRAATKAPGMEPSGSVAGLGELDPGAFLDKDAECREELLKDDSSEHGAPDSKEKTPGRHRRFTGDSGIEVCVCNRGHHDDDLKEFNTLIDDALDGPLDFCDSCHVRPPGDEEEGLCQSSEEQAREPGHPHLPRPPACLLLNTINEQDSPNSQSSSSPS.

A helical membrane pass occupies residues 42 to 62; sequence LWWFWLVWTIIIILSCCCVCH. 2 disordered regions span residues 133–247 and 292–320; these read LPPQ…RRFT and PGDE…RPPA. The segment covering 158 to 173 has biased composition (low complexity); sequence SSPLSEPSRSSTRPPS. Residue serine 173 is modified to Phosphoserine. Residues 212–240 are compositionally biased toward basic and acidic residues; the sequence is LDKDAECREELLKDDSSEHGAPDSKEKTP.

It localises to the membrane. In Homo sapiens (Human), this protein is WW domain binding protein 1-like (WBP1L).